Here is a 175-residue protein sequence, read N- to C-terminus: Myosin regulatory light chain 2, atrial isoform (175 aa).

The residue at position 2 (Ala-2) is an N-acetylalanine. A phosphoserine mark is found at Ser-22 and Ser-23. 3 consecutive EF-hand domains span residues 32–67, 102–137, and 138–173; these read AQIQ…LGKV, DPEE…QADK, and FSPA…GDEK. 4 residues coordinate Ca(2+): Asp-45, Asn-47, Asp-49, and Asp-56.

As to quaternary structure, myosin is a hexamer of 2 heavy chains and 4 light chains. In terms of tissue distribution, predominantly expressed in adult atrial muscle.

The chain is Myosin regulatory light chain 2, atrial isoform (MYL7) from Homo sapiens (Human).